Reading from the N-terminus, the 571-residue chain is Leucine aminopeptidase A1, chloroplastic (571 aa).

The N-terminal 53 residues, 1–53 (MATLRVSSLFASSSSSLHSNPSVFTKYQSSPKWAFSFPVTPLCSKRSKRIVHC), are a transit peptide targeting the chloroplast. 2 residues coordinate Mg(2+): Lys-342 and Asp-347. Lys-354 is a catalytic residue. Residues Asp-367, Asp-427, and Glu-429 each coordinate Mg(2+). Arg-431 is an active-site residue.

The protein belongs to the peptidase M17 family. As to quaternary structure, homohexamer (dimer of homotrimers). Requires Mg(2+) as cofactor. Observed during floral development. Expressed in healthy and senescent leaves, cotyledons (emergence from seed coats), pistils, sepals, petals, stamens, and floral buds (at protein level). Present at very low levels in healthy leaves.

The protein resides in the plastid. Its subcellular location is the chloroplast. The enzyme catalyses Release of an N-terminal amino acid, Xaa-|-Yaa-, in which Xaa is preferably Leu, but may be other amino acids including Pro although not Arg or Lys, and Yaa may be Pro. Amino acid amides and methyl esters are also readily hydrolyzed, but rates on arylamides are exceedingly low.. The catalysed reaction is Release of N-terminal proline from a peptide.. In terms of biological role, catalyzes the removal of unsubstituted N-terminal amino acids from various peptides. When associated as homohexamer, catalyzes the proteolyzes of Xaa-Leu dipeptides. Possesses leucine aminopeptidase activity against the model substrate leucine-amido methyl coumarin. Presumably involved in the processing and regular turnover of intracellular proteins. Regulates wound signaling and has a role in insect defense. Functions as a molecular chaperone to protect proteins from heat-induced damage. This chain is Leucine aminopeptidase A1, chloroplastic, found in Solanum lycopersicum (Tomato).